The following is a 557-amino-acid chain: Eudesmanediol synthase (557 aa).

The Mg(2+) site is built by Asp-310 and Asp-314. Positions 310, 314, and 450 each coordinate substrate. Residues 310–314 (DDTFD) carry the DDXXD motif motif. Residues Asn-453 and Ser-457 each coordinate Mg(2+).

The protein belongs to the terpene synthase family. Monomer. It depends on Mg(2+) as a cofactor. The cofactor is Mn(2+).

It localises to the cytoplasm. It carries out the reaction (2E,6E)-farnesyl diphosphate + 2 H2O = 7-epi-ent-eudesmane-5,11-diol + diphosphate. It participates in secondary metabolite biosynthesis; terpenoid biosynthesis. Functionally, component of the volatile terpenes biosynthesis pathways. Dihydroxylated sesquiterpenoid synthase that generates dually hydroxylated products directly from (E,E)-farnesyl diphosphate, primarily eudesmane-2,11-diol, along with two closely related structural isomers. This Zea mays (Maize) protein is Eudesmanediol synthase.